The sequence spans 89 residues: Small ribosomal subunit protein uS15 (89 aa).

Belongs to the universal ribosomal protein uS15 family. In terms of assembly, part of the 30S ribosomal subunit. Forms a bridge to the 50S subunit in the 70S ribosome, contacting the 23S rRNA.

One of the primary rRNA binding proteins, it binds directly to 16S rRNA where it helps nucleate assembly of the platform of the 30S subunit by binding and bridging several RNA helices of the 16S rRNA. Its function is as follows. Forms an intersubunit bridge (bridge B4) with the 23S rRNA of the 50S subunit in the ribosome. This chain is Small ribosomal subunit protein uS15, found in Rhizobium johnstonii (strain DSM 114642 / LMG 32736 / 3841) (Rhizobium leguminosarum bv. viciae).